Consider the following 109-residue polypeptide: Nucleoid-associated protein VC_1055 (109 aa).

The tract at residues 1 to 22 (MFGKGGMGNLMKQAQQMQERMQ) is disordered.

It belongs to the YbaB/EbfC family. In terms of assembly, homodimer.

It localises to the cytoplasm. Its subcellular location is the nucleoid. In terms of biological role, binds to DNA and alters its conformation. May be involved in regulation of gene expression, nucleoid organization and DNA protection. This chain is Nucleoid-associated protein VC_1055, found in Vibrio cholerae serotype O1 (strain ATCC 39315 / El Tor Inaba N16961).